Reading from the N-terminus, the 221-residue chain is ATP phosphoribosyltransferase (221 aa).

It belongs to the ATP phosphoribosyltransferase family. Short subfamily. In terms of assembly, heteromultimer composed of HisG and HisZ subunits.

Its subcellular location is the cytoplasm. It carries out the reaction 1-(5-phospho-beta-D-ribosyl)-ATP + diphosphate = 5-phospho-alpha-D-ribose 1-diphosphate + ATP. It functions in the pathway amino-acid biosynthesis; L-histidine biosynthesis; L-histidine from 5-phospho-alpha-D-ribose 1-diphosphate: step 1/9. Functionally, catalyzes the condensation of ATP and 5-phosphoribose 1-diphosphate to form N'-(5'-phosphoribosyl)-ATP (PR-ATP). Has a crucial role in the pathway because the rate of histidine biosynthesis seems to be controlled primarily by regulation of HisG enzymatic activity. This is ATP phosphoribosyltransferase from Carboxydothermus hydrogenoformans (strain ATCC BAA-161 / DSM 6008 / Z-2901).